A 324-amino-acid polypeptide reads, in one-letter code: Glyoxylate/hydroxypyruvate reductase B (324 aa).

Catalysis depends on residues Arg-237 and Glu-266. His-285 functions as the Proton donor in the catalytic mechanism.

This sequence belongs to the D-isomer specific 2-hydroxyacid dehydrogenase family. GhrB subfamily. Homodimer.

Its subcellular location is the cytoplasm. The catalysed reaction is glycolate + NADP(+) = glyoxylate + NADPH + H(+). The enzyme catalyses (R)-glycerate + NAD(+) = 3-hydroxypyruvate + NADH + H(+). It catalyses the reaction (R)-glycerate + NADP(+) = 3-hydroxypyruvate + NADPH + H(+). Functionally, catalyzes the NADPH-dependent reduction of glyoxylate and hydroxypyruvate into glycolate and glycerate, respectively. The polypeptide is Glyoxylate/hydroxypyruvate reductase B (Escherichia coli O9:H4 (strain HS)).